The primary structure comprises 128 residues: Ig kappa chain V-V region T1 (128 aa).

Positions 1 to 20 (MRTPAQFLGILLLWFPGIKC) are cleaved as a signal peptide. Residues 21–43 (DIKMTQSPSSMYASLGERVTISC) form a framework-1 region. C43 and C108 form a disulfide bridge. A complementarity-determining-1 region spans residues 44 to 54 (KASQDINSYLT). The framework-2 stretch occupies residues 55-69 (WFQQKPGKSPKTLLY). The segment at 70–76 (RANRLVD) is complementarity-determining-2. Residues 77-108 (GVPSRFSGSGSGQDFSLTISSLEYEDMGIYYC) are framework-3. The complementarity-determining-3 stretch occupies residues 109-117 (LQYDEFPLT). The tract at residues 118–127 (FGAGTKLELK) is framework-4.

This Mus musculus (Mouse) protein is Ig kappa chain V-V region T1.